The primary structure comprises 203 residues: MSPLTQTLLMILAAYLAGSISSAVLVCRMRGLPDPRLQGSGNPGATNVLRIGGASSAAMVLFFDMLKGAVPSYLAYLMGIDAVSLGLIAIAACLGHIYPVFFGFKGGKGVATAFGAMAPIGDDLAICLMASWVVLLLISRYSSLAAILTALLAPLYTWWLDDRFTIPVAMLSTLIIIRHKDNIQRLLKGEESKVSRKKRPKKS.

Helical transmembrane passes span 7-27 (TLLM…VLVC), 82-102 (AVSL…PVFF), 118-138 (APIG…LLLI), and 141-161 (YSSL…WWLD).

This sequence belongs to the PlsY family. Probably interacts with PlsX.

The protein localises to the cell inner membrane. It catalyses the reaction an acyl phosphate + sn-glycerol 3-phosphate = a 1-acyl-sn-glycero-3-phosphate + phosphate. The protein operates within lipid metabolism; phospholipid metabolism. Its function is as follows. Catalyzes the transfer of an acyl group from acyl-phosphate (acyl-PO(4)) to glycerol-3-phosphate (G3P) to form lysophosphatidic acid (LPA). This enzyme utilizes acyl-phosphate as fatty acyl donor, but not acyl-CoA or acyl-ACP. The chain is Glycerol-3-phosphate acyltransferase from Shewanella baltica (strain OS223).